Consider the following 347-residue polypeptide: Rhodopsin (347 aa).

The Extracellular portion of the chain corresponds to 1 to 33 (TEGPDFYIPMVNTTGVVRSPYEYPQYYLVNPAA). Asn12 carries N-linked (GlcNAc...) asparagine glycosylation. The helical transmembrane segment at 34–58 (YAVLGAYMFFLIIVGFPINFLTLYV) threads the bilayer. The Cytoplasmic portion of the chain corresponds to 59–70 (TLEHKKLRTPLN). A helical transmembrane segment spans residues 71 to 93 (YILLNLAVADLFMVIGGFTTTMY). Over 94 to 107 (SSMHGYFVLGRLGC) the chain is Extracellular. Cysteines 107 and 184 form a disulfide. Residues 108–130 (NIEGFFATLGGMISLWSLAVLAI) form a helical membrane-spanning segment. Residues 131 to 133 (ERW) carry the 'Ionic lock' involved in activated form stabilization motif. Residues 131–149 (ERWVVVCKPISNFRFGENH) lie on the Cytoplasmic side of the membrane. A helical transmembrane segment spans residues 150–170 (AIMGVSLTWVMALACTVPPLV). Topologically, residues 171–199 (GWSRYIPEGMQCACGIDYYTRAEGYNNES) are extracellular. An N-linked (GlcNAc...) asparagine glycan is attached at Asn197. A helical transmembrane segment spans residues 200 to 221 (FVIYMFTFHFLFPMFIIFFCYG). Over 222–249 (RLLCAVKEAAAAQQESETTQRAEREVTR) the chain is Cytoplasmic. The helical transmembrane segment at 250 to 271 (MVILMVIGYLVCWLPYASVAWF) threads the bilayer. Over 272 to 283 (IFTHKGSEFGPL) the chain is Extracellular. A helical membrane pass occupies residues 284 to 305 (FMAVPSFFAKSSSIYNPIIYIC). At Lys293 the chain carries N6-(retinylidene)lysine. Over 306–347 (MNKQFRQCMITTLFCGKNPFEGQEEDSSTKTEASSASSVSPA) the chain is Cytoplasmic. The S-palmitoyl cysteine moiety is linked to residue Cys320. The segment at 326–347 (EGQEEDSSTKTEASSASSVSPA) is disordered. Residues 335–347 (KTEASSASSVSPA) are compositionally biased toward low complexity.

Belongs to the G-protein coupled receptor 1 family. Opsin subfamily. Phosphorylated on some or all of the serine and threonine residues present in the C-terminal region. In terms of processing, contains one covalently linked retinal chromophore.

The protein localises to the membrane. The protein resides in the cell projection. It localises to the cilium. It is found in the photoreceptor outer segment. Its function is as follows. Photoreceptor required for image-forming vision at low light intensity. While most salt water fish species use retinal as chromophore, most freshwater fish use 3-dehydroretinal, or a mixture of retinal and 3-dehydroretinal. Light-induced isomerization of 11-cis to all-trans retinal triggers a conformational change that activates signaling via G-proteins. Subsequent receptor phosphorylation mediates displacement of the bound G-protein alpha subunit by arrestin and terminates signaling. This chain is Rhodopsin (rho), found in Sargocentron spiniferum (Sabre squirrelfish).